The primary structure comprises 393 residues: MTVIGTPLSPVRTRIMLLGSGELGKEVAIEAMRLGAEVVAVDRYAGAPAMQVAHRSHVISMLDADALRRLIAEERPDFVVPEIEAIATDVLEELESDSLTVVPTARAARLTMNREGIRRLAAEELGLRTSPYRFAQTEDEYRRAVEELGMPCVVKPVMSSSGKGQSVVRSADDIADAWTYAQSGGRAGGGRVIVESFVDFDYEITLLTVRHCNGTSFCEPIGHRQEDGDYRQSWQPQPMSAAALEQARHMAQAVTQALGGYGLFGVELFIKGDTVWFSEVSPRPHDTGLVTIASQNLSEFALHVRAVLGLPVPVIRQYGPAASSVILAEGSSARTRFGNLQEALGEPDTSLLLFGKPEVQGRRRMGVALALGETVEQAVEKACRVSDAVKVML.

Residues 22–23 and glutamate 82 contribute to the N(1)-(5-phospho-beta-D-ribosyl)glycinamide site; that span reads EL. ATP contacts are provided by residues arginine 114, lysine 155, 160–165, 195–198, and glutamate 203; these read SSGKGQ and ESFV. The 190-residue stretch at 119–308 folds into the ATP-grasp domain; the sequence is RLAAEELGLR…EFALHVRAVL (190 aa). Mg(2+) is bound by residues glutamate 267 and glutamate 279. Residues aspartate 286, lysine 356, and 363 to 364 each bind N(1)-(5-phospho-beta-D-ribosyl)glycinamide; that span reads RR.

This sequence belongs to the PurK/PurT family. In terms of assembly, homodimer.

It catalyses the reaction N(1)-(5-phospho-beta-D-ribosyl)glycinamide + formate + ATP = N(2)-formyl-N(1)-(5-phospho-beta-D-ribosyl)glycinamide + ADP + phosphate + H(+). It participates in purine metabolism; IMP biosynthesis via de novo pathway; N(2)-formyl-N(1)-(5-phospho-D-ribosyl)glycinamide from N(1)-(5-phospho-D-ribosyl)glycinamide (formate route): step 1/1. Involved in the de novo purine biosynthesis. Catalyzes the transfer of formate to 5-phospho-ribosyl-glycinamide (GAR), producing 5-phospho-ribosyl-N-formylglycinamide (FGAR). Formate is provided by PurU via hydrolysis of 10-formyl-tetrahydrofolate. The sequence is that of Formate-dependent phosphoribosylglycinamide formyltransferase from Oleidesulfovibrio alaskensis (strain ATCC BAA-1058 / DSM 17464 / G20) (Desulfovibrio alaskensis).